The primary structure comprises 428 residues: Sporulation kinase B (428 aa).

Topologically, residues 1-6 (MEILKD) are cytoplasmic. The chain crosses the membrane as a helical span at residues 7–27 (YLLHICFILFPILLYQVFWLG). At 28–37 (KPAILVPKIN) the chain is on the extracellular side. A helical membrane pass occupies residues 38–58 (SGLVTLFACGASVLCIIFPIH). At 59 to 68 (EMDYIQYGLQ) the chain is on the cytoplasmic side. A helical membrane pass occupies residues 69–89 (MIPVIICLFYISTASGLTVAA). The Extracellular segment spans residues 90–99 (SVLCFELLFY). A helical membrane pass occupies residues 100 to 120 (EPSAMFVFTLLPFLIIIPILF). The Cytoplasmic segment spans residues 121–132 (QKKWPFMSKAKK). The chain crosses the membrane as a helical span at residues 133–153 (LLLSLLISCVEIFLFFASSWI). The Extracellular portion of the chain corresponds to 154–166 (LSALNILNFQKSG). A helical membrane pass occupies residues 167-187 (IFVYEAAVSGLFRSSVLLLSI). Residues 188–428 (YIIESIAENI…TIKLPADLPH (241 aa)) lie on the Cytoplasmic side of the membrane. The Histidine kinase domain maps to 218–426 (SVAHEVRNPL…TVTIKLPADL (209 aa)). Residue histidine 221 is modified to Phosphohistidine; by autocatalysis.

It is found in the cell membrane. The enzyme catalyses ATP + protein L-histidine = ADP + protein N-phospho-L-histidine.. Its function is as follows. Phosphorylates the sporulation-regulatory proteins spo0A and spo0F. Spo0F is required for the KinB activity. This chain is Sporulation kinase B (kinB), found in Bacillus subtilis (strain 168).